Consider the following 166-residue polypeptide: Large ribosomal subunit protein uL10 (166 aa).

It belongs to the universal ribosomal protein uL10 family. In terms of assembly, part of the ribosomal stalk of the 50S ribosomal subunit. The N-terminus interacts with L11 and the large rRNA to form the base of the stalk. The C-terminus forms an elongated spine to which L12 dimers bind in a sequential fashion forming a multimeric L10(L12)X complex.

Forms part of the ribosomal stalk, playing a central role in the interaction of the ribosome with GTP-bound translation factors. In Streptococcus equi subsp. zooepidemicus (strain MGCS10565), this protein is Large ribosomal subunit protein uL10.